A 194-amino-acid polypeptide reads, in one-letter code: Peptidyl-tRNA hydrolase (194 aa).

Tyr-17 provides a ligand contact to tRNA. His-22 acts as the Proton acceptor in catalysis. TRNA-binding residues include Phe-68, Asn-70, and Asn-116.

It belongs to the PTH family. In terms of assembly, monomer.

It is found in the cytoplasm. It carries out the reaction an N-acyl-L-alpha-aminoacyl-tRNA + H2O = an N-acyl-L-amino acid + a tRNA + H(+). Its function is as follows. Hydrolyzes ribosome-free peptidyl-tRNAs (with 1 or more amino acids incorporated), which drop off the ribosome during protein synthesis, or as a result of ribosome stalling. In terms of biological role, catalyzes the release of premature peptidyl moieties from peptidyl-tRNA molecules trapped in stalled 50S ribosomal subunits, and thus maintains levels of free tRNAs and 50S ribosomes. This is Peptidyl-tRNA hydrolase from Pasteurella multocida (strain Pm70).